The sequence spans 203 residues: Ribosomal RNA small subunit methyltransferase G (203 aa).

Residues G73, L78, 124–125 (VE), and R139 contribute to the S-adenosyl-L-methionine site.

Belongs to the methyltransferase superfamily. RNA methyltransferase RsmG family.

The protein resides in the cytoplasm. It carries out the reaction guanosine(527) in 16S rRNA + S-adenosyl-L-methionine = N(7)-methylguanosine(527) in 16S rRNA + S-adenosyl-L-homocysteine. Its function is as follows. Specifically methylates the N7 position of guanine in position 527 of 16S rRNA. The chain is Ribosomal RNA small subunit methyltransferase G from Haemophilus influenzae (strain 86-028NP).